A 436-amino-acid chain; its full sequence is 3-ketoacyl-CoA thiolase (436 aa).

Cys99 serves as the catalytic Acyl-thioester intermediate. Active-site proton acceptor residues include His392 and Cys422.

Belongs to the thiolase-like superfamily. Thiolase family. In terms of assembly, heterotetramer of two alpha chains (FadJ) and two beta chains (FadI).

The protein localises to the cytoplasm. It catalyses the reaction an acyl-CoA + acetyl-CoA = a 3-oxoacyl-CoA + CoA. The protein operates within lipid metabolism; fatty acid beta-oxidation. Its function is as follows. Catalyzes the final step of fatty acid oxidation in which acetyl-CoA is released and the CoA ester of a fatty acid two carbons shorter is formed. The sequence is that of 3-ketoacyl-CoA thiolase from Salmonella schwarzengrund (strain CVM19633).